The chain runs to 134 residues: Profilin-3 (134 aa).

Cys13 and Cys118 are joined by a disulfide. Residues 84 to 100 (AVIRGKKGSGGITIKKT) carry the Involved in PIP2 interaction motif. Thr114 carries the post-translational modification Phosphothreonine.

Belongs to the profilin family. In terms of assembly, occurs in many kinds of cells as a complex with monomeric actin in a 1:1 ratio. In terms of processing, phosphorylated by MAP kinases.

Its subcellular location is the cytoplasm. It is found in the cytoskeleton. Binds to actin and affects the structure of the cytoskeleton. At high concentrations, profilin prevents the polymerization of actin, whereas it enhances it at low concentrations. In Olea europaea (Common olive), this protein is Profilin-3.